Reading from the N-terminus, the 964-residue chain is Translation initiation factor IF-2 (964 aa).

Over residues 1-10 (MSDKTNDDKT) the composition is skewed to basic and acidic residues. Positions 1–379 (MSDKTNDDKT…SQMQETREKI (379 aa)) are disordered. Residues 27–37 (EQSTVRQNFSH) are compositionally biased toward polar residues. Over residues 77 to 102 (APAASTPAPAQAAQPAQAAPVVRAPA) the composition is skewed to low complexity. Residues 103–113 (PATPAPKPAAP) show a composition bias toward pro residues. Low complexity predominate over residues 114–140 (AAPVTKPHVAQQRPAQQRPGGQQAQRP). Basic and acidic residues-rich tracts occupy residues 156–227 (SEMD…EAAK) and 234–243 (ARTERRDDAR). Residues 250-278 (RPQQAGRPQGNRPPQGGRPQQGGPRPAAP) are compositionally biased toward low complexity. A compositionally biased stretch (basic and acidic residues) spans 323–338 (PEVRAPKVVKTEDDRR). The region spanning 462-629 (SRPPVVTIMG…AILLQAEILD (168 aa)) is the tr-type G domain. The G1 stretch occupies residues 471–478 (GHVDHGKT). Position 471-478 (471-478 (GHVDHGKT)) interacts with GTP. The segment at 496 to 500 (GITQH) is G2. Positions 517 to 520 (DTPG) are G3. Residues 517–521 (DTPGH) and 571–574 (NKID) contribute to the GTP site. The G4 stretch occupies residues 571-574 (NKID). Residues 607–609 (SAK) form a G5 region.

It belongs to the TRAFAC class translation factor GTPase superfamily. Classic translation factor GTPase family. IF-2 subfamily.

The protein localises to the cytoplasm. In terms of biological role, one of the essential components for the initiation of protein synthesis. Protects formylmethionyl-tRNA from spontaneous hydrolysis and promotes its binding to the 30S ribosomal subunits. Also involved in the hydrolysis of GTP during the formation of the 70S ribosomal complex. The polypeptide is Translation initiation factor IF-2 (Brucella anthropi (strain ATCC 49188 / DSM 6882 / CCUG 24695 / JCM 21032 / LMG 3331 / NBRC 15819 / NCTC 12168 / Alc 37) (Ochrobactrum anthropi)).